We begin with the raw amino-acid sequence, 390 residues long: Mevalonate kinase (390 aa).

ATP-binding positions include Lys16, Ser130, and 135 to 141 (GAGLGSS). Residues Ser141 and Glu193 each coordinate Mg(2+). The active-site Proton acceptor is the Asp204.

Belongs to the GHMP kinase family. Mevalonate kinase subfamily. Requires Mg(2+) as cofactor.

The protein localises to the cytoplasm. The enzyme catalyses (R)-mevalonate + ATP = (R)-5-phosphomevalonate + ADP + H(+). The protein operates within isoprenoid biosynthesis; isopentenyl diphosphate biosynthesis via mevalonate pathway; isopentenyl diphosphate from (R)-mevalonate: step 1/3. Its function is as follows. Catalyzes the phosphorylation of mevalonate to mevalonate 5-phosphate, a key step in isoprenoid biosynthesis. This is Mevalonate kinase from Dictyostelium discoideum (Social amoeba).